We begin with the raw amino-acid sequence, 548 residues long: Non-structural protein NS1 (548 aa).

This sequence belongs to the orbivirus non-structural protein NS1 family.

This chain is Non-structural protein NS1 (Segment-5), found in African horse sickness virus (AHSV).